Reading from the N-terminus, the 63-residue chain is Conotoxin Cal6.28 (63 aa).

The signal sequence occupies residues 1 to 22 (MKLTCVLIVAVLILTACQVIAA). 3 disulfides stabilise this stretch: cysteine 34–cysteine 45, cysteine 37–cysteine 51, and cysteine 44–cysteine 58.

This sequence belongs to the conotoxin O1 superfamily. Expressed by the venom duct.

The protein localises to the secreted. Probable neurotoxin. The chain is Conotoxin Cal6.28 from Californiconus californicus (California cone).